The sequence spans 305 residues: Serine/threonine-protein phosphatase 4 catalytic subunit (305 aa).

Aspartate 52, histidine 54, aspartate 80, and asparagine 112 together coordinate Mn(2+). The Proton donor role is filled by histidine 113. Mn(2+) contacts are provided by histidine 162 and histidine 236.

The protein belongs to the PPP phosphatase family. PP-4 (PP-X) subfamily. In terms of assembly, serine/threonine-protein phosphatase 4 (PP4) occurs in different assemblies of the catalytic and one or more regulatory subunits. Probably part of a PP4 complex containing ppp4c and ppp4r2. Interacts with smkA. Requires Mn(2+) as cofactor.

It localises to the cytoplasm. The protein resides in the nucleus. The enzyme catalyses O-phospho-L-seryl-[protein] + H2O = L-seryl-[protein] + phosphate. It catalyses the reaction O-phospho-L-threonyl-[protein] + H2O = L-threonyl-[protein] + phosphate. Required for development, chemotaxis and the expression of numerous genes. The chain is Serine/threonine-protein phosphatase 4 catalytic subunit (ppp4c) from Dictyostelium discoideum (Social amoeba).